The primary structure comprises 30 residues: Rothein 3.3 (30 aa).

Leu30 bears the Leucine amide mark.

As to expression, expressed by the skin dorsal glands.

The protein resides in the secreted. Functionally, lacks antimicrobial activity. Does not inhibit the formation of NO by neuronal nitric oxide. The protein is Rothein 3.3 of Litoria rothii (Roth's tree frog).